Here is a 510-residue protein sequence, read N- to C-terminus: Probable cytosol aminopeptidase (510 aa).

Residues Lys-272 and Asp-277 each coordinate Mn(2+). The active site involves Lys-284. Asp-296, Asp-355, and Glu-357 together coordinate Mn(2+). The active site involves Arg-359.

The protein belongs to the peptidase M17 family. Mn(2+) serves as cofactor.

The protein localises to the cytoplasm. The enzyme catalyses Release of an N-terminal amino acid, Xaa-|-Yaa-, in which Xaa is preferably Leu, but may be other amino acids including Pro although not Arg or Lys, and Yaa may be Pro. Amino acid amides and methyl esters are also readily hydrolyzed, but rates on arylamides are exceedingly low.. It catalyses the reaction Release of an N-terminal amino acid, preferentially leucine, but not glutamic or aspartic acids.. In terms of biological role, presumably involved in the processing and regular turnover of intracellular proteins. Catalyzes the removal of unsubstituted N-terminal amino acids from various peptides. This is Probable cytosol aminopeptidase from Synechococcus sp. (strain JA-3-3Ab) (Cyanobacteria bacterium Yellowstone A-Prime).